The chain runs to 291 residues: N-acetylmannosamine kinase (291 aa).

ATP is bound by residues 5–12 (AIDIGGTK) and 132–139 (GVGGGVVC). 4 residues coordinate Zn(2+): histidine 156, cysteine 166, cysteine 168, and cysteine 173.

This sequence belongs to the ROK (NagC/XylR) family. NanK subfamily. As to quaternary structure, homodimer.

The catalysed reaction is an N-acyl-D-mannosamine + ATP = an N-acyl-D-mannosamine 6-phosphate + ADP + H(+). The protein operates within amino-sugar metabolism; N-acetylneuraminate degradation; D-fructose 6-phosphate from N-acetylneuraminate: step 2/5. Catalyzes the phosphorylation of N-acetylmannosamine (ManNAc) to ManNAc-6-P. This is N-acetylmannosamine kinase from Salmonella typhi.